The following is a 660-amino-acid chain: ATPase WRNIP1 (660 aa).

Residues 17-44 (QVQCPVCQQMMPAAHINSHLDRCLLLHP) form a UBZ4-type zinc finger. Cys-20, Cys-23, His-31, His-35, and Cys-39 together coordinate Zn(2+). The disordered stretch occupies residues 48–191 (AEPAAGSHRA…DDPGHWDADA (144 aa)). Residues Ser-65 and Ser-75 each carry the phosphoserine modification. Polar residues predominate over residues 76–89 (ESSALKQPATPTAA). Residue Lys-81 forms a Glycyl lysine isopeptide (Lys-Gly) (interchain with G-Cter in ubiquitin) linkage. Residue Thr-85 is modified to Phosphothreonine. A phosphoserine mark is found at Ser-91 and Ser-92. Residues 92 to 104 (SEGEGEEGDDGGE) show a composition bias toward acidic residues. Thr-116 is subject to Phosphothreonine. A compositionally biased stretch (low complexity) spans 135–155 (ARKGMGKRPAAAAAAGSASPR). A Glycyl lysine isopeptide (Lys-Gly) (interchain with G-Cter in ubiquitin) cross-link involves residue Lys-141. Ser-153 is subject to Phosphoserine. A compositionally biased stretch (acidic residues) spans 159 to 182 (EAEAQEEEEAGVDGDGDADVDGED). A Glycyl lysine isopeptide (Lys-Gly) (interchain with G-Cter in ubiquitin) cross-link involves residue Lys-220. Position 265-271 (265-271 (PGCGKTT)) interacts with ATP. Residues Lys-296, Lys-305, Lys-311, Lys-317, and Lys-330 each participate in a glycyl lysine isopeptide (Lys-Gly) (interchain with G-Cter in ubiquitin) cross-link. Lys-477 is covalently cross-linked (Glycyl lysine isopeptide (Lys-Gly) (interchain with G-Cter in SUMO2); alternate). Lys-477 participates in a covalent cross-link: Glycyl lysine isopeptide (Lys-Gly) (interchain with G-Cter in ubiquitin); alternate. Residues Tyr-529 and Tyr-557 each carry the phosphotyrosine modification. Residue Lys-622 forms a Glycyl lysine isopeptide (Lys-Gly) (interchain with G-Cter in ubiquitin) linkage. Residue Lys-628 forms a Glycyl lysine isopeptide (Lys-Gly) (interchain with G-Cter in ubiquitin); alternate linkage. Lys-628 carries the N6-acetyllysine; alternate modification. Lys-631 participates in a covalent cross-link: Glycyl lysine isopeptide (Lys-Gly) (interchain with G-Cter in ubiquitin).

Belongs to the AAA ATPase family. RarA/MGS1/WRNIP1 subfamily. In terms of assembly, forms homooligomers, possibly octamers. Directly interacts with POLD1, POLD2 and POLD4. Interacts with the N-terminal domain of WRN. Interacts (via UBZ4-type zinc finger) with monoubiquitin and polyubiquitin. Interacts with TRIM14 and PPP6C; these interactions positively regulate the RIGI signaling pathway. Post-translationally, sumoylated with SUMO1 and SUMO2/3. As to expression, ubiquitously expressed.

The protein resides in the nucleus. Its subcellular location is the cytoplasm. The enzyme catalyses ATP + H2O = ADP + phosphate + H(+). Its function is as follows. Functions as a modulator of initiation or reinitiation events during DNA polymerase delta-mediated DNA synthesis. In the presence of ATP, stimulation of DNA polymerase delta-mediated DNA synthesis is decreased. Also plays a role in the innate immune defense against viruses. Stabilizes the RIGI dsRNA interaction and promotes RIGI 'Lys-63'-linked polyubiquitination. In turn, RIGI transmits the signal through mitochondrial MAVS. This chain is ATPase WRNIP1, found in Mus musculus (Mouse).